We begin with the raw amino-acid sequence, 62 residues long: Toxin Tb2-II (62 aa).

Residues 1–62 (KEGYAMDHEG…KVWDYATNKC (62 aa)) enclose the LCN-type CS-alpha/beta domain. Disulfide bonds link Cys11–Cys62, Cys15–Cys38, Cys23–Cys43, and Cys27–Cys45.

It belongs to the long (4 C-C) scorpion toxin superfamily. Sodium channel inhibitor family. Beta subfamily. As to expression, expressed by the venom gland.

It is found in the secreted. Beta toxins bind voltage-independently at site-4 of sodium channels (Nav) and shift the voltage of activation toward more negative potentials thereby affecting sodium channel activation and promoting spontaneous and repetitive firing. This toxin is active against both mammals and insects. This Tityus bahiensis (Brazilian scorpion) protein is Toxin Tb2-II.